The following is a 323-amino-acid chain: uncharacterized protein (323 aa).

This is an uncharacterized protein from Treponema pallidum (strain Nichols).